Consider the following 62-residue polypeptide: UPF0434 protein Rleg2_3773 (62 aa).

This sequence belongs to the UPF0434 family.

In Rhizobium leguminosarum bv. trifolii (strain WSM2304), this protein is UPF0434 protein Rleg2_3773.